The chain runs to 312 residues: Olfactory receptor 2M5 (312 aa).

Residues 1–25 (MAWENQTFNSDFILLGIFNHSPTHT) lie on the Extracellular side of the membrane. A glycan (N-linked (GlcNAc...) asparagine) is linked at Asn-5. A helical membrane pass occupies residues 26 to 49 (FLFFLVLAIFSVAFMGNSVMVLLI). At 50 to 57 (YLDTQLHT) the chain is on the cytoplasmic side. The chain crosses the membrane as a helical span at residues 58-79 (PMYFLLSQLFLMDLMLICSTVP). Topologically, residues 80-100 (KMAFNYLSGSKSISMAGCATQ) are extracellular. Cys-97 and Cys-189 are joined by a disulfide. The helical transmembrane segment at 101-120 (IFFYVSLLGSECFLLAVMSY) threads the bilayer. Residues 121–139 (DRYIAICHPLRYTNLMRPK) lie on the Cytoplasmic side of the membrane. A helical transmembrane segment spans residues 140–158 (ICGLMTAFSWILGSMDAII). Residues 159-195 (DAVATFSFSYCGSREIAHFFCDFPSLLILSCNDTSIF) are Extracellular-facing. A helical transmembrane segment spans residues 196–219 (EKVLFICCIVMIVFPVAIIIASYA). Topologically, residues 220–236 (RVILAVIHMGSGEGRRK) are cytoplasmic. Residues 237 to 259 (AFTTCSSHLMVVGMYYGAGLFMY) form a helical membrane-spanning segment. The Extracellular portion of the chain corresponds to 260–272 (IRPTSDRSPMQDK). The helical transmembrane segment at 273 to 292 (LVSVFYTILTPMLNPLIYSL) threads the bilayer. At 293-311 (RNKEVTRALRKVLGKGKCG) the chain is on the cytoplasmic side.

It belongs to the G-protein coupled receptor 1 family.

The protein resides in the cell membrane. Its function is as follows. Odorant receptor. The chain is Olfactory receptor 2M5 (OR2M5) from Homo sapiens (Human).